The following is a 503-amino-acid chain: Nondiscriminating glutamyl-tRNA synthetase EARS2, mitochondrial (503 aa).

Residues 1–22 (MKILRGVSRQMCTSRPEVRVRF) constitute a mitochondrion transit peptide. Position 21–23 (21–23 (RFA)) interacts with L-glutamate. The short motif at 26–34 (PTGFLHLGG) is the 'HIGH' region element. Residue His-31 participates in ATP binding. L-glutamate contacts are provided by residues Glu-57, 209–213 (YHLAS), and Arg-227. ATP-binding positions include Glu-230 and 265 to 269 (KLSKR). The short motif at 265–269 (KLSKR) is the 'KMSKS' region element.

Belongs to the class-I aminoacyl-tRNA synthetase family. Glutamate--tRNA ligase type 1 subfamily.

The protein resides in the mitochondrion matrix. It carries out the reaction tRNA(Glx) + L-glutamate + ATP = L-glutamyl-tRNA(Glx) + AMP + diphosphate. The catalysed reaction is tRNA(Glu) + L-glutamate + ATP = L-glutamyl-tRNA(Glu) + AMP + diphosphate. It catalyses the reaction tRNA(Gln) + L-glutamate + ATP = L-glutamyl-tRNA(Gln) + AMP + diphosphate. In terms of biological role, non-discriminating glutamyl-tRNA synthetase that catalyzes aminoacylation of both mitochondrial tRNA(Glu) and tRNA(Gln) and participates in RNA aminoacylation for mitochondrial protein translation. Attachs glutamate to tRNA(Glu) or tRNA(Gln) in a two-step reaction: glutamate is first activated by ATP to form Glu-AMP and then transferred to the acceptor end of tRNA(Glu) or tRNA(Gln). In Danio rerio (Zebrafish), this protein is Nondiscriminating glutamyl-tRNA synthetase EARS2, mitochondrial.